A 356-amino-acid chain; its full sequence is Xylose/arabinose import permease protein XylH (356 aa).

Helical transmembrane passes span Leu14–Ser34, Ile41–Cys61, Ala70–Ile90, Ile96–Leu116, Leu126–Gly146, Val161–Leu181, Val211–Gly231, Phe242–Val262, Gly266–Asn286, and Ile287–Met307.

This sequence belongs to the binding-protein-dependent transport system permease family. The complex is composed of two ATP-binding proteins (XylG), two transmembrane proteins (XylH) and a solute-binding protein (XylF).

The protein resides in the cell membrane. Part of the ABC transporter complex XylFGH involved in the uptake of xylose and arabinose. Responsible for the translocation of the substrate across the membrane. The protein is Xylose/arabinose import permease protein XylH of Sulfolobus acidocaldarius (strain ATCC 33909 / DSM 639 / JCM 8929 / NBRC 15157 / NCIMB 11770).